The primary structure comprises 457 residues: Trigger factor (457 aa).

In terms of domain architecture, PPIase FKBP-type spans 162-243 (GDFVSIDLSA…VQTVKERELP (82 aa)). The disordered stretch occupies residues 434-457 (AELFGSSEDETEADASDSAESEDK). Residues 440–457 (SEDETEADASDSAESEDK) show a composition bias toward acidic residues.

Belongs to the FKBP-type PPIase family. Tig subfamily.

The protein resides in the cytoplasm. The catalysed reaction is [protein]-peptidylproline (omega=180) = [protein]-peptidylproline (omega=0). Involved in protein export. Acts as a chaperone by maintaining the newly synthesized protein in an open conformation. Functions as a peptidyl-prolyl cis-trans isomerase. This Rhodococcus erythropolis (strain PR4 / NBRC 100887) protein is Trigger factor.